A 150-amino-acid polypeptide reads, in one-letter code: Cytochrome c oxidase subunit 5A, mitochondrial (150 aa).

The transit peptide at 1–41 (MLGAALRRCAVAATTWAGPRGLLHSARTPGPAAAIQSVRCY) directs the protein to the mitochondrion. An SIFI-degron motif is present at residues 2 to 17 (LGAALRRCAVAATTWA). N6-acetyllysine occurs at positions 87 and 113. The residue at position 141 (T141) is a Phosphothreonine.

This sequence belongs to the cytochrome c oxidase subunit 5A family. As to quaternary structure, component of the cytochrome c oxidase (complex IV, CIV), a multisubunit enzyme composed of 14 subunits. The complex is composed of a catalytic core of 3 subunits MT-CO1, MT-CO2 and MT-CO3, encoded in the mitochondrial DNA, and 11 supernumerary subunits COX4I, COX5A, COX5B, COX6A, COX6B, COX6C, COX7A, COX7B, COX7C, COX8 and NDUFA4, which are encoded in the nuclear genome. The complex exists as a monomer or a dimer and forms supercomplexes (SCs) in the inner mitochondrial membrane with NADH-ubiquinone oxidoreductase (complex I, CI) and ubiquinol-cytochrome c oxidoreductase (cytochrome b-c1 complex, complex III, CIII), resulting in different assemblies (supercomplex SCI(1)III(2)IV(1) and megacomplex MCI(2)III(2)IV(2)). Interacts with AFG1L. Interacts with RAB5IF. In response to mitochondrial stress, the precursor protein is ubiquitinated by the SIFI complex in the cytoplasm before mitochondrial import, leading to its degradation. Within the SIFI complex, UBR4 initiates ubiquitin chain that are further elongated or branched by KCMF1.

The protein resides in the mitochondrion inner membrane. It participates in energy metabolism; oxidative phosphorylation. In terms of biological role, component of the cytochrome c oxidase, the last enzyme in the mitochondrial electron transport chain which drives oxidative phosphorylation. The respiratory chain contains 3 multisubunit complexes succinate dehydrogenase (complex II, CII), ubiquinol-cytochrome c oxidoreductase (cytochrome b-c1 complex, complex III, CIII) and cytochrome c oxidase (complex IV, CIV), that cooperate to transfer electrons derived from NADH and succinate to molecular oxygen, creating an electrochemical gradient over the inner membrane that drives transmembrane transport and the ATP synthase. Cytochrome c oxidase is the component of the respiratory chain that catalyzes the reduction of oxygen to water. Electrons originating from reduced cytochrome c in the intermembrane space (IMS) are transferred via the dinuclear copper A center (CU(A)) of subunit 2 and heme A of subunit 1 to the active site in subunit 1, a binuclear center (BNC) formed by heme A3 and copper B (CU(B)). The BNC reduces molecular oxygen to 2 water molecules using 4 electrons from cytochrome c in the IMS and 4 protons from the mitochondrial matrix. The protein is Cytochrome c oxidase subunit 5A, mitochondrial (COX5A) of Papio anubis (Olive baboon).